A 746-amino-acid polypeptide reads, in one-letter code: Polyribonucleotide nucleotidyltransferase (746 aa).

D520 and D526 together coordinate Mg(2+). In terms of domain architecture, KH spans 586 to 648 (PRIITVKVPV…EAARAAVNAI (63 aa)). Residues 657-729 (GERYLGTVVK…PRGKLSLVPV (73 aa)) form the S1 motif domain.

The protein belongs to the polyribonucleotide nucleotidyltransferase family. Mg(2+) serves as cofactor.

It localises to the cytoplasm. The catalysed reaction is RNA(n+1) + phosphate = RNA(n) + a ribonucleoside 5'-diphosphate. Involved in mRNA degradation. Catalyzes the phosphorolysis of single-stranded polyribonucleotides processively in the 3'- to 5'-direction. In Kineococcus radiotolerans (strain ATCC BAA-149 / DSM 14245 / SRS30216), this protein is Polyribonucleotide nucleotidyltransferase.